A 468-amino-acid chain; its full sequence is Cysteine--tRNA ligase (468 aa).

A Zn(2+)-binding site is contributed by C27. The 'HIGH' region signature appears at 29–39 (PTVYNYFHIGN). Zn(2+) is bound by residues C207, H232, and E236. A 'KMSKS' region motif is present at residues 264–268 (KMAKS). Position 267 (K267) interacts with ATP.

The protein belongs to the class-I aminoacyl-tRNA synthetase family. As to quaternary structure, monomer. The cofactor is Zn(2+).

It is found in the cytoplasm. The enzyme catalyses tRNA(Cys) + L-cysteine + ATP = L-cysteinyl-tRNA(Cys) + AMP + diphosphate. The sequence is that of Cysteine--tRNA ligase from Acetivibrio thermocellus (strain ATCC 27405 / DSM 1237 / JCM 9322 / NBRC 103400 / NCIMB 10682 / NRRL B-4536 / VPI 7372) (Clostridium thermocellum).